A 692-amino-acid polypeptide reads, in one-letter code: Putative ESX-1 scaffolding and assembly protein SaeA (692 aa).

Over residues 1–21 (MGERGELVSDLHPSDDHDADP) the composition is skewed to basic and acidic residues. 2 disordered regions span residues 1-23 (MGERGELVSDLHPSDDHDADPRL) and 87-134 (PAAP…TTGF). A compositionally biased stretch (pro residues) spans 89–107 (APEPDPPPVPEPQPEPEPG).

In terms of biological role, may be involved in assembly of the ESX-1 / type VII specialized secretion system (T7SS), which exports several proteins including EsxA and EsxB. Involved in DNA conjugation in recipient (MKD8) but not donor (mc(2)155) strain. In Mycolicibacterium smegmatis (strain MKD8) (Mycobacterium smegmatis), this protein is Putative ESX-1 scaffolding and assembly protein SaeA (saeA).